Here is a 217-residue protein sequence, read N- to C-terminus: Imidazole glycerol phosphate synthase subunit HisH (217 aa).

Positions 3–217 (TIAIVDYGVG…LYRNFVHWNP (215 aa)) constitute a Glutamine amidotransferase type-1 domain. Cys82 functions as the Nucleophile in the catalytic mechanism. Active-site residues include His197 and Glu199.

As to quaternary structure, heterodimer of HisH and HisF.

It localises to the cytoplasm. The enzyme catalyses 5-[(5-phospho-1-deoxy-D-ribulos-1-ylimino)methylamino]-1-(5-phospho-beta-D-ribosyl)imidazole-4-carboxamide + L-glutamine = D-erythro-1-(imidazol-4-yl)glycerol 3-phosphate + 5-amino-1-(5-phospho-beta-D-ribosyl)imidazole-4-carboxamide + L-glutamate + H(+). The catalysed reaction is L-glutamine + H2O = L-glutamate + NH4(+). The protein operates within amino-acid biosynthesis; L-histidine biosynthesis; L-histidine from 5-phospho-alpha-D-ribose 1-diphosphate: step 5/9. Its function is as follows. IGPS catalyzes the conversion of PRFAR and glutamine to IGP, AICAR and glutamate. The HisH subunit catalyzes the hydrolysis of glutamine to glutamate and ammonia as part of the synthesis of IGP and AICAR. The resulting ammonia molecule is channeled to the active site of HisF. In Cupriavidus pinatubonensis (strain JMP 134 / LMG 1197) (Cupriavidus necator (strain JMP 134)), this protein is Imidazole glycerol phosphate synthase subunit HisH.